The chain runs to 328 residues: D-cysteine desulfhydrase (328 aa).

Position 51 is an N6-(pyridoxal phosphate)lysine (lysine 51).

It belongs to the ACC deaminase/D-cysteine desulfhydrase family. Homodimer. Requires pyridoxal 5'-phosphate as cofactor.

It carries out the reaction D-cysteine + H2O = hydrogen sulfide + pyruvate + NH4(+) + H(+). Its function is as follows. Catalyzes the alpha,beta-elimination reaction of D-cysteine and of several D-cysteine derivatives. It could be a defense mechanism against D-cysteine. This is D-cysteine desulfhydrase from Escherichia coli O7:K1 (strain IAI39 / ExPEC).